Consider the following 364-residue polypeptide: Eukaryotic translation initiation factor 3 subunit H (364 aa).

In terms of domain architecture, MPN spans 13 to 162; sequence VQVDALVAIK…LRAYRLSPSF (150 aa).

It belongs to the eIF-3 subunit H family. As to quaternary structure, component of the eukaryotic translation initiation factor 3 (eIF-3) complex.

The protein localises to the cytoplasm. Component of the eukaryotic translation initiation factor 3 (eIF-3) complex, which is involved in protein synthesis of a specialized repertoire of mRNAs and, together with other initiation factors, stimulates binding of mRNA and methionyl-tRNAi to the 40S ribosome. The eIF-3 complex specifically targets and initiates translation of a subset of mRNAs involved in cell proliferation. This chain is Eukaryotic translation initiation factor 3 subunit H, found in Phaeosphaeria nodorum (strain SN15 / ATCC MYA-4574 / FGSC 10173) (Glume blotch fungus).